Consider the following 169-residue polypeptide: Adenine phosphoribosyltransferase (169 aa).

The protein belongs to the purine/pyrimidine phosphoribosyltransferase family. As to quaternary structure, homodimer.

It localises to the cytoplasm. The enzyme catalyses AMP + diphosphate = 5-phospho-alpha-D-ribose 1-diphosphate + adenine. The protein operates within purine metabolism; AMP biosynthesis via salvage pathway; AMP from adenine: step 1/1. Catalyzes a salvage reaction resulting in the formation of AMP, that is energically less costly than de novo synthesis. This Mycoplasmopsis synoviae (strain 53) (Mycoplasma synoviae) protein is Adenine phosphoribosyltransferase.